Here is a 229-residue protein sequence, read N- to C-terminus: NAD(P)H-hydrate epimerase (229 aa).

Residues 11-222 (YAAADIRAAE…DVGLDLSGAT (212 aa)) form the YjeF N-terminal domain. Position 59 to 63 (59 to 63 (NNGGD)) interacts with (6S)-NADPHX. Positions 60 and 124 each coordinate K(+). Residues 128 to 136 (GIGTTASPA) and aspartate 164 each bind (6S)-NADPHX. Position 167 (serine 167) interacts with K(+).

It belongs to the NnrE/AIBP family. It depends on K(+) as a cofactor.

It catalyses the reaction (6R)-NADHX = (6S)-NADHX. The catalysed reaction is (6R)-NADPHX = (6S)-NADPHX. Functionally, catalyzes the epimerization of the S- and R-forms of NAD(P)HX, a damaged form of NAD(P)H that is a result of enzymatic or heat-dependent hydration. This is a prerequisite for the S-specific NAD(P)H-hydrate dehydratase to allow the repair of both epimers of NAD(P)HX. The sequence is that of NAD(P)H-hydrate epimerase from Clavibacter sepedonicus (Clavibacter michiganensis subsp. sepedonicus).